A 183-amino-acid polypeptide reads, in one-letter code: ESX-1 secretion-associated protein EspH (183 aa).

The segment covering Met1–Ala16 has biased composition (acidic residues). The interval Met1 to Ala32 is disordered.

This is ESX-1 secretion-associated protein EspH from Mycobacterium tuberculosis (strain ATCC 25618 / H37Rv).